Reading from the N-terminus, the 480-residue chain is Outer capsid protein VP5 (480 aa).

Residues 1–48 (MTSKRLGARFPGFLNRIGSGITRAARSDTTKRIPSAAGRAVERVAASE) are involved in membrane permeabilization.

The protein belongs to the orbivirus VP5 family.

Its subcellular location is the virion. Functionally, VP5 protein is one of the two proteins (with VP2) which constitute the virus particle outer capsid. Acts as a membrane permeabilization protein that mediates release of viral particles from endosomal compartments into the cytoplasm. Permeabilization activity is probably negatively regulated by VP2 and is triggered by endosomal degradation of VP2 and exposure to low pH. The sequence is that of Outer capsid protein VP5 (Segment-6) from Ixodes (gulls).